The sequence spans 1205 residues: Plasma membrane calcium-transporting ATPase 4 (1205 aa).

Residues 1–100 (MTNPPGQSVS…KTFLELVWEA (100 aa)) are Cytoplasmic-facing. Residues 101–121 (LQDVTLIILEIAAIISLVLSF) form a helical membrane-spanning segment. Topologically, residues 122–147 (YRPPGGDNEICGHIASSPEEEEEGET) are extracellular. Residues 148 to 168 (GWIEGAAILASVIIVVLVTAF) form a helical membrane-spanning segment. Residues 169–369 (NDWSKEKQFR…LAVQIGKAGL (201 aa)) lie on the Cytoplasmic side of the membrane. The interval 294-318 (DDDDKKKKGKKQGAPENRNKAKTQD) is disordered. Residues serine 329 and serine 335 each carry the phosphoserine modification. A helical transmembrane segment spans residues 370–390 (IMSVLTVVILILYFVVDNFVI). Residues 391–409 (QRREWLPECTPVYIQYFVK) lie on the Extracellular side of the membrane. A helical membrane pass occupies residues 410–430 (FFIIGVTVLVVAVPEGLPLAV). The Cytoplasmic portion of the chain corresponds to 431-844 (TISLAYSVKK…RNVYDSISKF (414 aa)). Aspartate 466 serves as the catalytic 4-aspartylphosphate intermediate. Aspartate 786 and aspartate 790 together coordinate Mg(2+). Residues 845–865 (LQFQLTVNVVAVIVAFTGACI) form a helical membrane-spanning segment. Residues 866–872 (TQDSPLK) lie on the Extracellular side of the membrane. The helical transmembrane segment at 873-893 (AVQMLWVNLIMDTFASLALAT) threads the bilayer. Topologically, residues 894 to 919 (EPPTESLLRRRPYGRNKPLISRTMMK) are cytoplasmic. A helical transmembrane segment spans residues 920–942 (NILGHAVYQLLIVFLLVFAGDTL). At 943 to 956 (FDIDSGRKAPLNSP) the chain is on the extracellular side. The chain crosses the membrane as a helical span at residues 957 to 979 (PSQHYTIVFNTFVLMQLFNEINA). Over 980–995 (RKIHGEKNVFAGVYRN) the chain is Cytoplasmic. Residues 996–1016 (IIFCTVVLGTFFCQIMIVELG) traverse the membrane as a helical segment. At 1017–1029 (GKPFSCTSLTMEQ) the chain is on the extracellular side. Residues 1030–1050 (WMWCLFIGIGELLWGQVISAI) traverse the membrane as a helical segment. The Cytoplasmic segment spans residues 1051–1205 (PTKSLKFLKE…SPLPSLETPV (155 aa)). Phosphoserine occurs at positions 1065 and 1071. An Omega-N-methylarginine modification is found at arginine 1072. The interval 1087 to 1104 (LRRGQILWVRGLNRIQTQ) is calmodulin-binding subdomain A. Threonine 1103 bears the Phosphothreonine; by PKC mark. Residues 1105-1114 (IRVVKLFHNN) form a calmodulin-binding subdomain B region. Phosphoserine is present on serine 1145.

Belongs to the cation transport ATPase (P-type) (TC 3.A.3) family. Type IIB subfamily. As to quaternary structure, interacts with PDZD11. Interacts with SLC35G1 and STIM1. Interacts with calmodulin. In terms of tissue distribution, specifically expressed by sperm in testis (at protein level).

The protein resides in the membrane. It localises to the cell projection. It is found in the cilium. Its subcellular location is the flagellum membrane. The catalysed reaction is Ca(2+)(in) + ATP + H2O = Ca(2+)(out) + ADP + phosphate + H(+). With respect to regulation, activated by calcium/calmodulin. In terms of biological role, calcium/calmodulin-regulated and magnesium-dependent enzyme that catalyzes the hydrolysis of ATP coupled with the transport of calcium out of the cell. By regulating sperm cell calcium homeostasis, may play a role in sperm motility. In Mus musculus (Mouse), this protein is Plasma membrane calcium-transporting ATPase 4.